The primary structure comprises 331 residues: Probable zinc-binding oxidoreductase, mitochondrial (331 aa).

A compositionally biased stretch (polar residues) spans 1-29; that stretch reads MASVTSVPKTGRSVNQDVPATTLTLQTRP. Residues 1 to 34 form a disordered region; sequence MASVTSVPKTGRSVNQDVPATTLTLQTRPTPAPN.

Belongs to the zinc-containing alcohol dehydrogenase family. Quinone oxidoreductase subfamily.

The protein localises to the mitochondrion. This Arthroderma benhamiae (strain ATCC MYA-4681 / CBS 112371) (Trichophyton mentagrophytes) protein is Probable zinc-binding oxidoreductase, mitochondrial.